A 384-amino-acid polypeptide reads, in one-letter code: S-adenosylmethionine synthase (384 aa).

Position 15 (His15) interacts with ATP. Asp17 contributes to the Mg(2+) binding site. A K(+)-binding site is contributed by Glu43. Residues Glu56 and Gln99 each contribute to the L-methionine site. The flexible loop stretch occupies residues 99-109; that stretch reads QSPDINQGVDK. Residues 164–166, 230–231, Asp239, 245–246, Ala262, and Lys266 each bind ATP; these read DAK, RF, and RK. L-methionine is bound at residue Asp239. Residue Lys270 participates in L-methionine binding.

The protein belongs to the AdoMet synthase family. As to quaternary structure, homotetramer; dimer of dimers. It depends on Mg(2+) as a cofactor. K(+) is required as a cofactor.

The protein localises to the cytoplasm. It carries out the reaction L-methionine + ATP + H2O = S-adenosyl-L-methionine + phosphate + diphosphate. Its pathway is amino-acid biosynthesis; S-adenosyl-L-methionine biosynthesis; S-adenosyl-L-methionine from L-methionine: step 1/1. Catalyzes the formation of S-adenosylmethionine (AdoMet) from methionine and ATP. The overall synthetic reaction is composed of two sequential steps, AdoMet formation and the subsequent tripolyphosphate hydrolysis which occurs prior to release of AdoMet from the enzyme. This Aliivibrio fischeri (strain ATCC 700601 / ES114) (Vibrio fischeri) protein is S-adenosylmethionine synthase.